Here is a 107-residue protein sequence, read N- to C-terminus: Iron-binding protein IscA (107 aa).

Residues cysteine 35, cysteine 99, and cysteine 101 each contribute to the Fe cation site.

This sequence belongs to the HesB/IscA family. In terms of assembly, homodimer; may form tetramers and higher multimers. The cofactor is Fe cation.

Its function is as follows. Is able to transfer iron-sulfur clusters to apo-ferredoxin. Multiple cycles of [2Fe2S] cluster formation and transfer are observed, suggesting that IscA acts catalytically. Recruits intracellular free iron so as to provide iron for the assembly of transient iron-sulfur cluster in IscU in the presence of IscS, L-cysteine and the thioredoxin reductase system TrxA/TrxB. The chain is Iron-binding protein IscA from Salmonella newport (strain SL254).